Consider the following 71-residue polypeptide: SPbeta prophage-derived uncharacterized protein YopF (71 aa).

The protein is SPbeta prophage-derived uncharacterized protein YopF (yopF) of Bacillus subtilis (strain 168).